The following is a 145-amino-acid chain: D-aminoacyl-tRNA deacylase (145 aa).

The short motif at 137–138 (GP) is the Gly-cisPro motif, important for rejection of L-amino acids element.

The protein belongs to the DTD family. As to quaternary structure, homodimer.

The protein resides in the cytoplasm. The enzyme catalyses glycyl-tRNA(Ala) + H2O = tRNA(Ala) + glycine + H(+). The catalysed reaction is a D-aminoacyl-tRNA + H2O = a tRNA + a D-alpha-amino acid + H(+). In terms of biological role, an aminoacyl-tRNA editing enzyme that deacylates mischarged D-aminoacyl-tRNAs. Also deacylates mischarged glycyl-tRNA(Ala), protecting cells against glycine mischarging by AlaRS. Acts via tRNA-based rather than protein-based catalysis; rejects L-amino acids rather than detecting D-amino acids in the active site. By recycling D-aminoacyl-tRNA to D-amino acids and free tRNA molecules, this enzyme counteracts the toxicity associated with the formation of D-aminoacyl-tRNA entities in vivo and helps enforce protein L-homochirality. The polypeptide is D-aminoacyl-tRNA deacylase (Pectobacterium carotovorum subsp. carotovorum (strain PC1)).